The following is a 328-amino-acid chain: MTLYSKIIGTGSYLPPNRVTNQDLIERLALDGIETSDEWIVSRSGISARHYADADMQSSDLAVEAAKRALDMAKLAANDIDLIILATSTPDFFGGFPSTACVVQRKLGVTNGCAAVDVQAVCSGFVYALATADKFIKSGSHKNVLVIGAEVFSRIIDFKDRTTCVLFGDGSGAVVMTASEEPGVLATKLHADGSYGDILCGPGRISNGVLEGSAFMYMDGQAVFKLAIGLLDKVANEVLQLAKMDASEVDWIVPHQANIRIMQGTAKKLGLSMDKMIVTVDQHGNTSAASIPMALDVGVRDGRIKPGQNVMMEGVGGGFTWGAVLARM.

Active-site residues include cysteine 122 and histidine 255. An ACP-binding region spans residues 256–260 (QANIR). Asparagine 285 is an active-site residue.

The protein belongs to the thiolase-like superfamily. FabH family. As to quaternary structure, homodimer.

Its subcellular location is the cytoplasm. The enzyme catalyses malonyl-[ACP] + acetyl-CoA + H(+) = 3-oxobutanoyl-[ACP] + CO2 + CoA. Its pathway is lipid metabolism; fatty acid biosynthesis. Functionally, catalyzes the condensation reaction of fatty acid synthesis by the addition to an acyl acceptor of two carbons from malonyl-ACP. Catalyzes the first condensation reaction which initiates fatty acid synthesis and may therefore play a role in governing the total rate of fatty acid production. Possesses both acetoacetyl-ACP synthase and acetyl transacylase activities. Its substrate specificity determines the biosynthesis of branched-chain and/or straight-chain of fatty acids. The polypeptide is Beta-ketoacyl-[acyl-carrier-protein] synthase III (Herminiimonas arsenicoxydans).